The chain runs to 421 residues: Gamma-glutamyl phosphate reductase (421 aa).

The protein belongs to the gamma-glutamyl phosphate reductase family.

The protein resides in the cytoplasm. It carries out the reaction L-glutamate 5-semialdehyde + phosphate + NADP(+) = L-glutamyl 5-phosphate + NADPH + H(+). The protein operates within amino-acid biosynthesis; L-proline biosynthesis; L-glutamate 5-semialdehyde from L-glutamate: step 2/2. Functionally, catalyzes the NADPH-dependent reduction of L-glutamate 5-phosphate into L-glutamate 5-semialdehyde and phosphate. The product spontaneously undergoes cyclization to form 1-pyrroline-5-carboxylate. The polypeptide is Gamma-glutamyl phosphate reductase (Nitrosospira multiformis (strain ATCC 25196 / NCIMB 11849 / C 71)).